Consider the following 232-residue polypeptide: Large ribosomal subunit protein uL10c (232 aa).

Residues 1–52 constitute a chloroplast transit peptide; the sequence is MESTLFLSKPLPTTIKTTTHSLSSVYPNPFKPNNLTFPRTTHKHPTTTTITA.

The protein belongs to the universal ribosomal protein uL10 family. As to quaternary structure, component of the chloroplast large ribosomal subunit (LSU). Mature 70S chloroplast ribosomes of higher plants consist of a small (30S) and a large (50S) subunit. The 30S small subunit contains 1 molecule of ribosomal RNA (16S rRNA) and 24 different proteins. The 50S large subunit contains 3 rRNA molecules (23S, 5S and 4.5S rRNA) and 33 different proteins.

The protein localises to the plastid. The protein resides in the chloroplast. In terms of biological role, component of the chloroplast ribosome (chloro-ribosome), a dedicated translation machinery responsible for the synthesis of chloroplast genome-encoded proteins, including proteins of the transcription and translation machinery and components of the photosynthetic apparatus. The protein is Large ribosomal subunit protein uL10c (RPL10) of Spinacia oleracea (Spinach).